An 859-amino-acid polypeptide reads, in one-letter code: Valine--tRNA ligase (859 aa).

The short motif at 46–56 (PTVSGQLHIGH) is the 'HIGH' region element. The 'KMSKS' region motif lies at 583-587 (KMSKS). Lys586 serves as a coordination point for ATP.

The protein belongs to the class-I aminoacyl-tRNA synthetase family. ValS type 2 subfamily. Monomer.

It localises to the cytoplasm. The enzyme catalyses tRNA(Val) + L-valine + ATP = L-valyl-tRNA(Val) + AMP + diphosphate. Catalyzes the attachment of valine to tRNA(Val). As ValRS can inadvertently accommodate and process structurally similar amino acids such as threonine, to avoid such errors, it has a 'posttransfer' editing activity that hydrolyzes mischarged Thr-tRNA(Val) in a tRNA-dependent manner. The chain is Valine--tRNA ligase from Rickettsia felis (strain ATCC VR-1525 / URRWXCal2) (Rickettsia azadi).